Here is a 205-residue protein sequence, read N- to C-terminus: Rho-related protein racI (205 aa).

12-19 is a binding site for GTP; the sequence is GDSKTGKT. The Effector region motif lies at 34–42; it reads YVPSHVDAT. Residues 59-63 and 119-122 each bind GTP; these read DSSAL and TKCD. Cysteine 202 carries the cysteine methyl ester modification. Residue cysteine 202 is the site of S-geranylgeranyl cysteine attachment. The propeptide at 203–205 is removed in mature form; sequence IIQ.

It belongs to the small GTPase superfamily. Rho family.

Its subcellular location is the cell membrane. This chain is Rho-related protein racI (racI), found in Dictyostelium discoideum (Social amoeba).